The primary structure comprises 152 residues: Small ribosomal subunit protein bS6 (152 aa).

The protein belongs to the bacterial ribosomal protein bS6 family.

Functionally, binds together with bS18 to 16S ribosomal RNA. In Bdellovibrio bacteriovorus (strain ATCC 15356 / DSM 50701 / NCIMB 9529 / HD100), this protein is Small ribosomal subunit protein bS6.